Consider the following 222-residue polypeptide: Sortase A (222 aa).

The Cytoplasmic segment spans residues 1–7 (MLKKTIA). The chain crosses the membrane as a helical span at residues 8–28 (IIILIIGLLLIFSPFIKNGIV). Over 29–222 (KYMSGHETIE…ELENKYFPSK (194 aa)) the chain is Extracellular. Histidine 127 serves as the catalytic Proton donor/acceptor. The Acyl-thioester intermediate role is filled by cysteine 188.

The protein belongs to the bacterial sortase family. Class A subfamily.

Its subcellular location is the cell membrane. With respect to regulation, activity is enhanced by Zn(2+) and strongly enhanced by Ca(2+). Inhibited by chalcone, a precursor of several flavonoids, which blocks the SrtA active site. Transpeptidase that anchors surface proteins to the cell wall. Recognizes and modifies its substrate by proteolytic cleavage of a C-terminal sorting signal. Following cleavage, a covalent intermediate is formed via a thioester bond between the sortase and its substrate, which is then transferred and covalently attached to the cell wall. This sortase recognizes a Leu-Pro-x-Thr-Gly (LPXTG) motif, which is cleaved by the sortase between the threonine and glycine residues. Involved in pathogenesis. May regulate the rate of synthesis and/or the stability of a subset of LPXTG proteins. Not involved in cell wall-anchoring of Hbp2 (SvpA) or Hbp1. This Listeria monocytogenes serovar 1/2a (strain ATCC BAA-679 / EGD-e) protein is Sortase A.